The sequence spans 287 residues: Protease HtpX (287 aa).

The next 2 membrane-spanning stretches (helical) occupy residues 4-24 and 33-53; these read IFLL…VMSI and GGLL…SLAI. His-139 contacts Zn(2+). The active site involves Glu-140. Zn(2+) is bound at residue His-143. 2 consecutive transmembrane segments (helical) span residues 154–174 and 195–215; these read LIQG…AGII and AVVF…VAYF. Glu-220 lines the Zn(2+) pocket.

The protein belongs to the peptidase M48B family. It depends on Zn(2+) as a cofactor.

The protein localises to the cell inner membrane. The polypeptide is Protease HtpX (Shewanella sp. (strain ANA-3)).